Consider the following 295-residue polypeptide: NADPH-dependent reductive aminase (295 aa).

A signal peptide spans M1–A18. NADP(+) is bound at residue G6 to K20.

This sequence belongs to the HIBADH-related family. In terms of assembly, homodimer. NADPH is required as a cofactor.

Its function is as follows. NADPH-dependent reductive aminase that catalyzes the reductive coupling of a broad set of carbonyl compounds with a variety of primary and secondary amines. Possesses remarkably high activity for the reductive amination of ketones and amines, often with high stereoselectivity and in some cases with ketone:amine ratios as low as 1:1. The cofactor NADPH, the carbonyl compound and the amine are added to the enzyme in that sequence, followed by the release of product, NADP(+) being released at last. RedAm is also able to act in the reverse, oxidative direction and exhibits activity in the dehydrogenation of amines to yield imines. The highest activity is found for 1-methyl-tetrahydroquinoline and acyclic amines are also found to be transformed. The sequence is that of NADPH-dependent reductive aminase from Aspergillus oryzae (strain ATCC 42149 / RIB 40) (Yellow koji mold).